The primary structure comprises 270 residues: tRNA pseudouridine synthase A (270 aa).

Aspartate 60 acts as the Nucleophile in catalysis. A substrate-binding site is contributed by tyrosine 118.

The protein belongs to the tRNA pseudouridine synthase TruA family. In terms of assembly, homodimer.

It catalyses the reaction uridine(38/39/40) in tRNA = pseudouridine(38/39/40) in tRNA. Formation of pseudouridine at positions 38, 39 and 40 in the anticodon stem and loop of transfer RNAs. The sequence is that of tRNA pseudouridine synthase A from Cronobacter sakazakii (strain ATCC BAA-894) (Enterobacter sakazakii).